The sequence spans 507 residues: Cytochrome P450 monooxygenase cloA (507 aa).

A helical transmembrane segment spans residues 15 to 35; the sequence is WTWILLTTCIALISPLVLKGI. N-linked (GlcNAc...) asparagine glycosylation is present at asparagine 247. Position 450 (cysteine 450) interacts with heme.

It belongs to the cytochrome P450 family. It depends on heme as a cofactor.

The protein resides in the membrane. Its pathway is alkaloid biosynthesis; ergot alkaloid biosynthesis. Functionally, cytochrome P450 monooxygenase; part of the gene cluster that mediates the biosynthesis of fungal ergot alkaloid. DmaW catalyzes the first step of ergot alkaloid biosynthesis by condensing dimethylallyl diphosphate (DMAP) and tryptophan to form 4-dimethylallyl-L-tryptophan. The second step is catalyzed by the methyltransferase easF that methylates 4-dimethylallyl-L-tryptophan in the presence of S-adenosyl-L-methionine, resulting in the formation of 4-dimethylallyl-L-abrine. The catalase easC and the FAD-dependent oxidoreductase easE then transform 4-dimethylallyl-L-abrine to chanoclavine-I which is further oxidized by easD in the presence of NAD(+), resulting in the formation of chanoclavine-I aldehyde. Agroclavine dehydrogenase easG then mediates the conversion of chanoclavine-I aldehyde to agroclavine via a non-enzymatic adduct reaction: the substrate is an iminium intermediate that is formed spontaneously from chanoclavine-I aldehyde in the presence of glutathione. The presence of easA is not required to complete this reaction. Further conversion of agroclavine to paspalic acid is a two-step process involving oxidation of agroclavine to elymoclavine and of elymoclavine to paspalic acid, the second step being performed by the elymoclavine oxidase cloA. Paspalic acid is then further converted to D-lysergic acid. Ergopeptines are assembled from D-lysergic acid and three different amino acids by the D-lysergyl-peptide-synthetases composed each of a monomudular and a trimodular nonribosomal peptide synthetase subunit. LpsB and lpsC encode the monomodular subunits responsible for D-lysergic acid activation and incorporation into the ergopeptine backbone. LpsA1 and A2 subunits encode the trimodular nonribosomal peptide synthetase assembling the tripeptide portion of ergopeptines. LpsA1 is responsible for formation of the major ergopeptine, ergotamine, and lpsA2 for alpha-ergocryptine, the minor ergopeptine of the total alkaloid mixture elaborated by C.purpurea. D-lysergyl-tripeptides are assembled by the nonribosomal peptide synthetases and released as N-(D-lysergyl-aminoacyl)-lactams. Cyclolization of the D-lysergyl-tripeptides is performed by the Fe(2+)/2-ketoglutarate-dependent dioxygenase easH which introduces a hydroxyl group into N-(D-lysergyl-aminoacyl)-lactam at alpha-C of the aminoacyl residue followed by spontaneous condensation with the terminal lactam carbonyl group. In Claviceps purpurea (strain 20.1) (Ergot fungus), this protein is Cytochrome P450 monooxygenase cloA.